The primary structure comprises 300 residues: NAD kinase (300 aa).

The active-site Proton acceptor is aspartate 75. NAD(+) contacts are provided by residues 75 to 76, 149 to 150, arginine 177, aspartate 179, 190 to 195, alanine 214, and glutamine 248; these read DG, ND, and TAYALS.

It belongs to the NAD kinase family. A divalent metal cation serves as cofactor.

The protein localises to the cytoplasm. It carries out the reaction NAD(+) + ATP = ADP + NADP(+) + H(+). Its function is as follows. Involved in the regulation of the intracellular balance of NAD and NADP, and is a key enzyme in the biosynthesis of NADP. Catalyzes specifically the phosphorylation on 2'-hydroxyl of the adenosine moiety of NAD to yield NADP. This Burkholderia pseudomallei (strain K96243) protein is NAD kinase.